A 192-amino-acid chain; its full sequence is Sarcoplasmic calcium-binding protein, alpha-B and -A chains (192 aa).

Residue alanine 1 is modified to N-acetylalanine. EF-hand domains lie at 4–39, 56–91, 100–135, and 136–171; these read WDNR…NTLI, IMRN…HCQG, AFKV…RSAF, and AEVK…YAQF. Ca(2+)-binding residues include aspartate 17, aspartate 19, aspartate 21, aspartate 28, aspartate 69, asparagine 71, aspartate 73, glutamate 75, glutamate 80, aspartate 113, asparagine 115, aspartate 117, lysine 119, and glutamate 124.

As to quaternary structure, SCPs from crayfish, lobster, and shrimp are polymorphic dimers; three isotypes (alpha-alpha, alpha-beta, and beta-beta) have been identified.

Functionally, like parvalbumins, SCPs seem to be more abundant in fast contracting muscles, but no functional relationship can be established from this distribution. In Penaeus sp. (Penoeid shrimp), this protein is Sarcoplasmic calcium-binding protein, alpha-B and -A chains.